The primary structure comprises 344 residues: Cysteine proteinase 5 (344 aa).

The N-terminal stretch at 1–17 is a signal peptide; sequence MKVLSFLCVLLVSVATA. The propeptide at 18-111 is activation peptide; the sequence is KQQFSELQYR…TQEEKVFTTS (94 aa). 3 disulfide bridges follow: C133-C174, C167-C207, and C265-C333. Residue C136 is part of the active site. H272 is an active-site residue. N297 carries an N-linked (GlcNAc...) asparagine glycan. The active site involves N311.

It belongs to the peptidase C1 family. Glycosylated; contains GlcNAc-alpha-1-P-Ser residues.

It localises to the lysosome. This chain is Cysteine proteinase 5 (cprE), found in Dictyostelium discoideum (Social amoeba).